We begin with the raw amino-acid sequence, 131 residues long: Translation initiation factor 5A (131 aa).

Position 36 is a hypusine (Lys36).

It belongs to the eIF-5A family.

Its subcellular location is the cytoplasm. In terms of biological role, functions by promoting the formation of the first peptide bond. This chain is Translation initiation factor 5A, found in Saccharolobus solfataricus (strain ATCC 35092 / DSM 1617 / JCM 11322 / P2) (Sulfolobus solfataricus).